Consider the following 446-residue polypeptide: Peptide chain release factor 1, mitochondrial (446 aa).

A mitochondrion-targeting transit peptide spans 1 to 62 (MSHHLCIWLF…LLNKSWSRGC (62 aa)). The segment at 298–362 (PKDLRVDTFR…LRARLYQQII (65 aa)) is GGQ domain. The GGQ signature appears at 312-314 (GGQ). The residue at position 314 (Gln314) is an N5-methylglutamine.

This sequence belongs to the prokaryotic/mitochondrial release factor family. In terms of processing, methylation of glutamine in the GGQ triplet by HEMK1 is conserved from bacteria to mammals.

The protein localises to the mitochondrion. Mitochondrial peptide chain release factor that directs the termination of translation in response to the peptide chain non-canonical stop codons AGG and AGA. Non-canonical termination codons AGG and AGA are found at the end of MT-CO1/COX1 and MT-ND6/ND6 open reading frames, respectively. Recognizes non-canonical stop codons via a network of interactions between the codon, MTRF1 and the ribosomal RNA (rRNA): in contrast to other translation release factors, which identify the codon in the A-site via direct interactions of amino acid side chains with the bases, MTRF1 repositions the first 2 bases of the stop codon to use an intricate network of interactions that includes residues of the release factor, the rRNA of the small ribosomal subunit, as well as neighboring bases of the mRNA. The sequence is that of Peptide chain release factor 1, mitochondrial from Mus musculus (Mouse).